Consider the following 432-residue polypeptide: Adenylosuccinate synthetase (432 aa).

GTP-binding positions include 13–19 and 41–43; these read GDEGKGK and GHT. Aspartate 14 functions as the Proton acceptor in the catalytic mechanism. Residues aspartate 14 and glycine 41 each contribute to the Mg(2+) site. IMP is bound by residues 14-17, 39-42, threonine 130, arginine 144, glutamine 225, threonine 240, and arginine 304; these read DEGK and NAGH. Histidine 42 (proton donor) is an active-site residue. 300-306 is a binding site for substrate; that stretch reads ATTGRPR. GTP is bound by residues arginine 306, 332 to 334, and 415 to 417; these read KLD and STG.

This sequence belongs to the adenylosuccinate synthetase family. Homodimer. It depends on Mg(2+) as a cofactor.

It is found in the cytoplasm. It carries out the reaction IMP + L-aspartate + GTP = N(6)-(1,2-dicarboxyethyl)-AMP + GDP + phosphate + 2 H(+). Its pathway is purine metabolism; AMP biosynthesis via de novo pathway; AMP from IMP: step 1/2. Plays an important role in the de novo pathway of purine nucleotide biosynthesis. Catalyzes the first committed step in the biosynthesis of AMP from IMP. This chain is Adenylosuccinate synthetase, found in Hahella chejuensis (strain KCTC 2396).